Here is a 487-residue protein sequence, read N- to C-terminus: N-succinylglutamate 5-semialdehyde dehydrogenase (487 aa).

The segment at 1 to 23 (MTHFIKGQWHTGKGHDVASSNPA) is disordered. 220-225 (GSSRTG) is an NAD(+) binding site. Active-site residues include glutamate 243 and cysteine 277.

Belongs to the aldehyde dehydrogenase family. AstD subfamily.

It carries out the reaction N-succinyl-L-glutamate 5-semialdehyde + NAD(+) + H2O = N-succinyl-L-glutamate + NADH + 2 H(+). Its pathway is amino-acid degradation; L-arginine degradation via AST pathway; L-glutamate and succinate from L-arginine: step 4/5. Catalyzes the NAD-dependent reduction of succinylglutamate semialdehyde into succinylglutamate. The polypeptide is N-succinylglutamate 5-semialdehyde dehydrogenase (Shewanella oneidensis (strain ATCC 700550 / JCM 31522 / CIP 106686 / LMG 19005 / NCIMB 14063 / MR-1)).